Consider the following 133-residue polypeptide: Mediator of RNA polymerase II transcription subunit 10 (133 aa).

The span at methionine 1–phenylalanine 13 shows a compositional bias: polar residues. Residues methionine 1 to lysine 28 form a disordered region. The span at serine 15 to lysine 28 shows a compositional bias: basic and acidic residues.

This sequence belongs to the Mediator complex subunit 10 family. As to quaternary structure, component of the Mediator complex.

The protein resides in the nucleus. Component of the Mediator complex, a coactivator involved in the regulated transcription of nearly all RNA polymerase II-dependent genes. Mediator functions as a bridge to convey information from gene-specific regulatory proteins to the basal RNA polymerase II transcription machinery. Mediator is recruited to promoters by direct interactions with regulatory proteins and serves as a scaffold for the assembly of a functional preinitiation complex with RNA polymerase II and the general transcription factors. The protein is Mediator of RNA polymerase II transcription subunit 10 (NUT2) of Phaeosphaeria nodorum (strain SN15 / ATCC MYA-4574 / FGSC 10173) (Glume blotch fungus).